A 215-amino-acid polypeptide reads, in one-letter code: Adenylate kinase (215 aa).

ATP is bound at residue 10–15 (GTGKGT). An NMP region spans residues 30 to 59 (STGDMLRESVVLKNKIGMIIKNIIEEGKLV). Residues Thr-31, Arg-36, 57–59 (KLV), 85–88 (GFPR), and Gln-92 contribute to the AMP site. The segment at 122 to 159 (GRRIHIQSGRIYHVKFKPPKIKDKDDLTGQTLITRKDD) is LID. ATP contacts are provided by residues Arg-123 and 132 to 133 (IY). Residues Arg-156 and Arg-167 each coordinate AMP. Leu-200 provides a ligand contact to ATP.

This sequence belongs to the adenylate kinase family. In terms of assembly, monomer.

Its subcellular location is the cytoplasm. It carries out the reaction AMP + ATP = 2 ADP. The protein operates within purine metabolism; AMP biosynthesis via salvage pathway; AMP from ADP: step 1/1. In terms of biological role, catalyzes the reversible transfer of the terminal phosphate group between ATP and AMP. Plays an important role in cellular energy homeostasis and in adenine nucleotide metabolism. This Buchnera aphidicola subsp. Acyrthosiphon pisum (strain 5A) protein is Adenylate kinase.